A 263-amino-acid polypeptide reads, in one-letter code: 4-hydroxy-2-oxo-heptane-1,7-dioate aldolase (263 aa).

The active-site Proton acceptor is the His45. Gln147 is a binding site for substrate. An a divalent metal cation-binding site is contributed by Glu149. Substrate is bound by residues Ala174 and Asp175. Asp175 contacts a divalent metal cation.

The protein belongs to the HpcH/HpaI aldolase family. As to quaternary structure, homohexamer; trimer of dimers. Requires a divalent metal cation as cofactor.

It catalyses the reaction 4-hydroxy-2-oxoheptanedioate = succinate semialdehyde + pyruvate. The protein operates within aromatic compound metabolism; 4-hydroxyphenylacetate degradation; pyruvate and succinate semialdehyde from 4-hydroxyphenylacetate: step 7/7. Functionally, catalyzes the reversible retro-aldol cleavage of 4-hydroxy-2-ketoheptane-1,7-dioate (HKHD) to pyruvate and succinic semialdehyde. The sequence is that of 4-hydroxy-2-oxo-heptane-1,7-dioate aldolase from Salmonella paratyphi A (strain ATCC 9150 / SARB42).